We begin with the raw amino-acid sequence, 101 residues long: A-type ATP synthase subunit F (101 aa).

It belongs to the V-ATPase F subunit family. Has multiple subunits with at least A(3), B(3), C, D, E, F, H, I and proteolipid K(x).

The protein localises to the cell membrane. Its function is as follows. Component of the A-type ATP synthase that produces ATP from ADP in the presence of a proton gradient across the membrane. This is A-type ATP synthase subunit F from Methanosarcina acetivorans (strain ATCC 35395 / DSM 2834 / JCM 12185 / C2A).